The primary structure comprises 384 residues: Methyl-CpG-binding domain-containing protein 10 (384 aa).

The region spanning T4–T74 is the MBD domain. Residues S65–C384 are disordered. The segment covering R80–T91 has biased composition (polar residues). A coiled-coil region spans residues K100 to K224. 3 stretches are compositionally biased toward basic and acidic residues: residues T106–G227, E234–Q250, and D257–N269. The span at K270–T284 shows a compositional bias: polar residues. Residues E295–R365 show a composition bias toward basic and acidic residues. Residues T310–N356 adopt a coiled-coil conformation. Position 323 is a phosphoserine (S323). Positions A369–C384 are enriched in low complexity.

Expressed in leaves, buds, flowers, stems and siliques.

The protein localises to the nucleus. In terms of biological role, probable transcriptional regulator. Required for nucleolar dominance that consist in the silencing of rRNA genes inherited from one progenitor in genetic hybrids. In Arabidopsis thaliana (Mouse-ear cress), this protein is Methyl-CpG-binding domain-containing protein 10 (MBD10).